The primary structure comprises 856 residues: Alanine/arginine aminopeptidase (856 aa).

Residues Glu-132 and 264-268 (GAMEN) contribute to the substrate site. Position 300 (His-300) interacts with Zn(2+). Catalysis depends on Glu-301, which acts as the Proton acceptor. The Zn(2+) site is built by His-304 and Glu-323.

Belongs to the peptidase M1 family. It depends on Zn(2+) as a cofactor.

Its function is as follows. Positive effector of glycogen accumulation. May be involved in nutrient-sensing. This Saccharomyces cerevisiae (strain ATCC 204508 / S288c) (Baker's yeast) protein is Alanine/arginine aminopeptidase (AAP1).